Consider the following 299-residue polypeptide: tRNA dimethylallyltransferase (299 aa).

11–18 (GPTAVGKT) is a binding site for ATP. 13–18 (TAVGKT) provides a ligand contact to substrate. Residues 36–39 (DSQQ) form an interaction with substrate tRNA region.

Belongs to the IPP transferase family. As to quaternary structure, monomer. The cofactor is Mg(2+).

It carries out the reaction adenosine(37) in tRNA + dimethylallyl diphosphate = N(6)-dimethylallyladenosine(37) in tRNA + diphosphate. Its function is as follows. Catalyzes the transfer of a dimethylallyl group onto the adenine at position 37 in tRNAs that read codons beginning with uridine, leading to the formation of N6-(dimethylallyl)adenosine (i(6)A). In Streptococcus pyogenes serotype M18 (strain MGAS8232), this protein is tRNA dimethylallyltransferase.